The sequence spans 353 residues: Photosystem II protein D1 (353 aa).

Position 2 is an N-acetylthreonine (T2). T2 carries the phosphothreonine modification. The next 3 helical transmembrane spans lie at Y29–S46, H118–L133, and W142–A156. H118 is a chlorophyll a binding site. Y126 serves as a coordination point for pheophytin a. [CaMn4O5] cluster-binding residues include D170 and E189. Residues F197–L218 traverse the membrane as a helical segment. Position 198 (H198) interacts with chlorophyll a. Residues H215 and S264–F265 contribute to the a quinone site. Residue H215 participates in Fe cation binding. H272 lines the Fe cation pocket. A helical membrane pass occupies residues F274–L288. 4 residues coordinate [CaMn4O5] cluster: H332, E333, D342, and A344. The propeptide occupies A345 to G353.

It belongs to the reaction center PufL/M/PsbA/D family. PSII is composed of 1 copy each of membrane proteins PsbA, PsbB, PsbC, PsbD, PsbE, PsbF, PsbH, PsbI, PsbJ, PsbK, PsbL, PsbM, PsbT, PsbX, PsbY, PsbZ, Psb30/Ycf12, at least 3 peripheral proteins of the oxygen-evolving complex and a large number of cofactors. It forms dimeric complexes. It depends on The D1/D2 heterodimer binds P680, chlorophylls that are the primary electron donor of PSII, and subsequent electron acceptors. It shares a non-heme iron and each subunit binds pheophytin, quinone, additional chlorophylls, carotenoids and lipids. D1 provides most of the ligands for the Mn4-Ca-O5 cluster of the oxygen-evolving complex (OEC). There is also a Cl(-1) ion associated with D1 and D2, which is required for oxygen evolution. The PSII complex binds additional chlorophylls, carotenoids and specific lipids. as a cofactor. Post-translationally, tyr-161 forms a radical intermediate that is referred to as redox-active TyrZ, YZ or Y-Z. In terms of processing, C-terminally processed by CTPA; processing is essential to allow assembly of the oxygen-evolving complex and thus photosynthetic growth.

The protein resides in the plastid. It localises to the chloroplast thylakoid membrane. It catalyses the reaction 2 a plastoquinone + 4 hnu + 2 H2O = 2 a plastoquinol + O2. In terms of biological role, photosystem II (PSII) is a light-driven water:plastoquinone oxidoreductase that uses light energy to abstract electrons from H(2)O, generating O(2) and a proton gradient subsequently used for ATP formation. It consists of a core antenna complex that captures photons, and an electron transfer chain that converts photonic excitation into a charge separation. The D1/D2 (PsbA/PsbD) reaction center heterodimer binds P680, the primary electron donor of PSII as well as several subsequent electron acceptors. This chain is Photosystem II protein D1, found in Marchantia polymorpha (Common liverwort).